A 365-amino-acid chain; its full sequence is 3-isopropylmalate dehydrogenase (365 aa).

80 to 91 (GPKWGTGSVRPE) contacts NAD(+). Residues Arg-98, Arg-108, Arg-137, and Asp-226 each coordinate substrate. Residues Asp-226, Asp-251, and Asp-255 each contribute to the Mg(2+) site. 290 to 301 (GSAPDLPKGKVN) is an NAD(+) binding site.

This sequence belongs to the isocitrate and isopropylmalate dehydrogenases family. Homodimer. Mg(2+) serves as cofactor. The cofactor is Mn(2+).

Its subcellular location is the cytoplasm. The catalysed reaction is (2R,3S)-3-isopropylmalate + NAD(+) = 4-methyl-2-oxopentanoate + CO2 + NADH. The protein operates within amino-acid biosynthesis; L-leucine biosynthesis; L-leucine from 3-methyl-2-oxobutanoate: step 3/4. Functionally, catalyzes the oxidation of 3-carboxy-2-hydroxy-4-methylpentanoate (3-isopropylmalate) to 3-carboxy-4-methyl-2-oxopentanoate. The product decarboxylates to 4-methyl-2 oxopentanoate. The sequence is that of 3-isopropylmalate dehydrogenase (LEU2) from Maudiozyma exigua (Yeast).